We begin with the raw amino-acid sequence, 5112 residues long: Malformin synthetase mlfA (5112 aa).

The interval Glu225 to Leu616 is adenylation 1. The Carrier 1 domain occupies Ser757–Glu830. Ser791 is subject to O-(pantetheine 4'-phosphoryl)serine. The interval Glu868 to Ala1299 is condensation 1. An adenylation 2 region spans residues Asp1327 to Arg1716. A Carrier 2 domain is found at Thr1854–Pro1931. Position 1891 is an O-(pantetheine 4'-phosphoryl)serine (Ser1891). Disordered stretches follow at residues Glu1926–Asp1961 and Gly1994–Pro2034. Composition is skewed to low complexity over residues Ser1930–Ser1941 and Gly1994–Ser2012. The tract at residues Glu2064–Leu2479 is condensation 2. Positions Ile2502–Leu2894 are adenylation 3. Residues Arg3030–Lys3106 form the Carrier 3 domain. O-(pantetheine 4'-phosphoryl)serine is present on Ser3067. Condensation regions lie at residues Trp3122 to Gln3586 and Asn3607 to Val4044. An adenylation 4 region spans residues His4069–Phe4459. One can recognise a Carrier 4 domain in the interval Met4593–Gln4669. O-(pantetheine 4'-phosphoryl)serine is present on Ser4630. A condensation 5 region spans residues Ile4724–Asp5106.

Belongs to the NRP synthetase family.

It functions in the pathway secondary metabolite biosynthesis. Its function is as follows. Nonribosomal peptide synthetase; part of the gene cluster that mediates the biosynthesis of malformins, cyclic pentapeptides with a disulfide bond between 2 consecutive cysteins, that show potential anti-tumor as well as antimalarial and antitrypanosomal properties. The nonribosomal peptide synthetase mlfA is responsible of the formation of the cyclic pentapeptide. MlfA probably acts iteratively on one amino acid and possesses multiple amino acid specificities since it is involved in the biosynthesis of multiple malformins, including malformin C and malformin A2. Malformin C corresponds to a cyclo[D-Cys-D-Cys-Val-D-Leu-Val] pentapeptide whereas malformin A2 corresponds to a cyclo[D-Cys-D-Cys-Val-D-Leu-Ile] pentapeptide. The malformin biosynthesis clusters in malformin-producing fungi also contain enzymes involved in the formation of the disulfide bond between the two consecutive cysteins within malformins, in addition to additional tailoring enzymes such as methyltransferases or oxidoreductases. They are also composed of up to 4 major facilitator superfamily transporters, and transcription factors probably involved in the regulation of the expression of those clusters. The protein is Malformin synthetase mlfA of Aspergillus brasiliensis (strain CBS 101740 / IMI 381727 / IBT 21946).